A 66-amino-acid polypeptide reads, in one-letter code: Prokaryotic ubiquitin-like protein UBact (66 aa).

The interval Met-1–Glu-66 is disordered. Over residues Gly-30 to Glu-66 the composition is skewed to basic and acidic residues. Glu-66 participates in a covalent cross-link: Isoglutamyl lysine isopeptide (Glu-Lys) (interchain with K-? in acceptor proteins).

Belongs to the ubiquitin-like protein UBact family.

Functionally, may function as a protein modifier covalently attached to lysine residues of substrate proteins. This may serve to target the modified proteins for degradation by proteasomes. This chain is Prokaryotic ubiquitin-like protein UBact, found in Nitrospira moscoviensis.